Here is a 609-residue protein sequence, read N- to C-terminus: Proline--tRNA ligase (609 aa).

The protein belongs to the class-II aminoacyl-tRNA synthetase family. ProS type 1 subfamily. Homodimer.

It localises to the cytoplasm. It carries out the reaction tRNA(Pro) + L-proline + ATP = L-prolyl-tRNA(Pro) + AMP + diphosphate. Catalyzes the attachment of proline to tRNA(Pro) in a two-step reaction: proline is first activated by ATP to form Pro-AMP and then transferred to the acceptor end of tRNA(Pro). As ProRS can inadvertently accommodate and process non-cognate amino acids such as alanine and cysteine, to avoid such errors it has two additional distinct editing activities against alanine. One activity is designated as 'pretransfer' editing and involves the tRNA(Pro)-independent hydrolysis of activated Ala-AMP. The other activity is designated 'posttransfer' editing and involves deacylation of mischarged Ala-tRNA(Pro). The misacylated Cys-tRNA(Pro) is not edited by ProRS. This Synechococcus sp. (strain JA-3-3Ab) (Cyanobacteria bacterium Yellowstone A-Prime) protein is Proline--tRNA ligase.